The chain runs to 146 residues: Hemoglobin subunit beta (146 aa).

Position 1 is an N-acetylvaline (valine 1). Residues 2-146 enclose the Globin domain; the sequence is HLTAEEKSAV…VANALAHKYH (145 aa). Threonine 12 carries the phosphothreonine modification. At serine 44 the chain carries Phosphoserine. Lysine 59 is modified (N6-acetyllysine). Residue histidine 63 coordinates heme b. Lysine 82 bears the N6-acetyllysine mark. Heme b is bound at residue histidine 92. Cysteine 93 is modified (S-nitrosocysteine). Lysine 144 carries the N6-acetyllysine modification.

The protein belongs to the globin family. As to quaternary structure, heterotetramer of two alpha chains and two beta chains. In terms of tissue distribution, red blood cells.

Involved in oxygen transport from the lung to the various peripheral tissues. The protein is Hemoglobin subunit beta (HBB) of Leptonychotes weddellii (Weddell seal).